Here is a 120-residue protein sequence, read N- to C-terminus: MARIAGVDLPQKKRIEYALTYIYGIGLTTSRKILDRTGIDYNTRVHELTDAQAATIRNDIQENVMVEGDLRKKVTLDIKALMDLGSYRGLRHRRGLPCRGQKTKTNARTRKGKRKTVGAA.

The segment at 93-120 (RRGLPCRGQKTKTNARTRKGKRKTVGAA) is disordered.

It belongs to the universal ribosomal protein uS13 family. As to quaternary structure, part of the 30S ribosomal subunit. Forms a loose heterodimer with protein S19. Forms two bridges to the 50S subunit in the 70S ribosome.

Its function is as follows. Located at the top of the head of the 30S subunit, it contacts several helices of the 16S rRNA. In the 70S ribosome it contacts the 23S rRNA (bridge B1a) and protein L5 of the 50S subunit (bridge B1b), connecting the 2 subunits; these bridges are implicated in subunit movement. Contacts the tRNAs in the A and P-sites. The protein is Small ribosomal subunit protein uS13 of Sulfurovum sp. (strain NBC37-1).